Here is a 1131-residue protein sequence, read N- to C-terminus: Plasma membrane ATPase (1131 aa).

Helical transmembrane passes span 77–97, 98–118, 151–171, 231–251, 265–285, and 305–325; these read PVLVFLGYMWNPLAWAMEAAA, IISIALLDVADFVLIVGLLLI, GAIVTIDAVNLVPGDVILIRL, AVVYATGVNTFFGRAAALISG, MSAICIVTILLWVVVELAVQF, and MLVVLVGGIPIAMPTVLSVTL. Asp-357 serves as the catalytic 4-aspartylphosphate intermediate. The Mg(2+) site is built by Asp-615 and Asp-619. The next 5 helical transmembrane spans lie at 642–662, 689–709, 733–753, 884–904, and 946–966; these read AADIVLTEPGLSTIVTAVIGA, LITVIYDWYFPTILIVIMAVF, ITNIFIMGMVYGLYLTLSTWA, LAFFFAQVGATLFGIFGLGGF, and VIGCGGYVIVAWIWSAIWYVL. Basic and acidic residues predominate over residues 994-1010; that stretch reads KRSLDRRSKDDIGDKEF. 2 disordered regions span residues 994 to 1023 and 1067 to 1131; these read KRSLDRRSKDDIGDKEFTGPSGMVPANYSN and RRSM…TIRE. Polar residues predominate over residues 1089 to 1100; that stretch reads SRTSNTLSTGSK. Over residues 1118 to 1131 the composition is skewed to basic and acidic residues; that stretch reads IKPDKYDFASTIRE.

The protein belongs to the cation transport ATPase (P-type) (TC 3.A.3) family. Type IIIA subfamily.

The protein resides in the cell membrane. The catalysed reaction is ATP + H2O + H(+)(in) = ADP + phosphate + 2 H(+)(out). Its function is as follows. The plasma membrane ATPase of plants and fungi is a hydrogen ion pump. The proton gradient it generates drives the active transport of nutrients by H(+)-symport. The resulting external acidification and/or internal alkinization may mediate growth responses. This chain is Plasma membrane ATPase (PMA1), found in Dunaliella bioculata (Green alga).